We begin with the raw amino-acid sequence, 114 residues long: Large ribosomal subunit protein bL20c (114 aa).

It belongs to the bacterial ribosomal protein bL20 family.

The protein resides in the plastid. It localises to the cyanelle. Functionally, binds directly to 23S ribosomal RNA and is necessary for the in vitro assembly process of the 50S ribosomal subunit. It is not involved in the protein synthesizing functions of that subunit. This is Large ribosomal subunit protein bL20c (rpl20) from Cyanophora paradoxa.